The primary structure comprises 153 residues: UPF0266 membrane protein YPTB1631 (153 aa).

The next 3 helical transmembrane spans lie at 6–26 (LVLVVFIALLLIYAIYDEFIM), 45–65 (LDCMIFVGLIGILIYNNVMAH), and 67–87 (APLTTYLLVGLALVAVYISYI).

It belongs to the UPF0266 family.

Its subcellular location is the cell inner membrane. This Yersinia pseudotuberculosis serotype I (strain IP32953) protein is UPF0266 membrane protein YPTB1631.